A 424-amino-acid polypeptide reads, in one-letter code: uncharacterized protein (424 aa).

N6-(pyridoxal phosphate)lysine is present on Lys-259.

The protein belongs to the class-III pyridoxal-phosphate-dependent aminotransferase family. The cofactor is pyridoxal 5'-phosphate.

This is an uncharacterized protein from Archaeoglobus fulgidus (strain ATCC 49558 / DSM 4304 / JCM 9628 / NBRC 100126 / VC-16).